We begin with the raw amino-acid sequence, 523 residues long: Carboxypeptidase Y (523 aa).

The first 20 residues, 1–20, serve as a signal peptide directing secretion; the sequence is MILHTYIILSLLTIFPKAIG. The propeptide occupies 21 to 107; that stretch reads LSLQMPMALE…QELPNYRLRV (87 aa). 5 disulfides stabilise this stretch: C162/C401, C296/C310, C320/C343, C327/C336, and C365/C371. An N-linked (GlcNAc...) asparagine glycan is attached at N193. Residue S249 is part of the active site. The N-linked (GlcNAc...) asparagine glycan is linked to N271. The active site involves D441. 2 N-linked (GlcNAc...) asparagine glycosylation sites follow: N484 and N487. H498 is an active-site residue.

This sequence belongs to the peptidase S10 family.

The protein resides in the vacuole. The catalysed reaction is Release of a C-terminal amino acid with broad specificity.. In terms of biological role, involved in degradation of small peptides. The polypeptide is Carboxypeptidase Y (PRC1) (Komagataella phaffii (strain GS115 / ATCC 20864) (Yeast)).